A 211-amino-acid polypeptide reads, in one-letter code: Pyrrolidone-carboxylate peptidase 1 (211 aa).

Active-site residues include glutamate 79, cysteine 142, and histidine 164.

It belongs to the peptidase C15 family. In terms of assembly, homotetramer.

It is found in the cytoplasm. The enzyme catalyses Release of an N-terminal pyroglutamyl group from a polypeptide, the second amino acid generally not being Pro.. Its function is as follows. Removes 5-oxoproline from various penultimate amino acid residues except L-proline. This Saccharolobus solfataricus (strain ATCC 35092 / DSM 1617 / JCM 11322 / P2) (Sulfolobus solfataricus) protein is Pyrrolidone-carboxylate peptidase 1 (pcp1).